The following is a 118-amino-acid chain: Large ribosomal subunit protein bL17 (118 aa).

The protein belongs to the bacterial ribosomal protein bL17 family. Part of the 50S ribosomal subunit. Contacts protein L32.

In Campylobacter concisus (strain 13826), this protein is Large ribosomal subunit protein bL17.